Reading from the N-terminus, the 281-residue chain is Gas vesicle protein L1 (281 aa).

It belongs to the gas vesicle GvpF/GvpL family. As to quaternary structure, may form oligomers. GvpF to GvpM interact with each other in vitro, and may form multi-subunit complex(es). Interacts with GvpC1, GvpN1 and GvpO1.

The protein resides in the gas vesicle. The protein localises to the cytoplasm. Its function is as follows. Proteins GvpF to GvpM might be involved in nucleating gas vesicle formation. A minor component of the gas vesicle. This the only minor gas vesicle protein that binds all the others (including GvpC1, GvpN1 and GvpO1, but not GvpA1), suggesting it might be able to assemble them. Gas vesicles are hollow, gas filled proteinaceous nanostructures found in several microbial planktonic microorganisms. They allow positioning of halobacteria at the optimal depth for growth in the poorly aerated, shallow brine pools of their habitat. In terms of biological role, expression of a 9.5 kb p-vac DNA fragment containing 2 divergently transcribed regions (gvpD-gvpE-gvpF-gvpG-gvpH-gvpI-gvpJ-gvpK-gvpL-gvpM and gvpA-gvpC-gvpN-gvpO) allows H.volcanii to produce gas vesicles. A minimal gas vesicle can be made in H.volcanii by gvpA1-gvpO1 plus gvpF1-gvpG1-gvpJ1-gvpK1-gvpL1-gvpM1; lack of enough GvpJ1 prevents their formation. A similar region restores gas vesicle production in H.halobium without the p-vac locus, but it still has the c-vac locus. The polypeptide is Gas vesicle protein L1 (gvpL11) (Halobacterium salinarum (strain ATCC 700922 / JCM 11081 / NRC-1) (Halobacterium halobium)).